The sequence spans 433 residues: FAD-dependent monooxygenase notI' (433 aa).

The FAD site is built by Glu-45 and Arg-117. Arg-195 is a catalytic residue. The FAD site is built by Asp-314 and Ala-327.

The protein belongs to the paxM FAD-dependent monooxygenase family. It depends on FAD as a cofactor.

Its pathway is alkaloid biosynthesis. Its function is as follows. FAD-dependent monooxygenase; part of the gene cluster that mediates the biosynthesis of notoamide, a fungal indole alkaloid that belongs to a family of natural products containing a characteristic bicyclo[2.2.2]diazaoctane core. The first step of notoamide biosynthesis involves coupling of L-proline and L-tryptophan by the bimodular NRPS notE', to produce cyclo-L-tryptophan-L-proline called brevianamide F. The reverse prenyltransferase notF' then acts as a deoxybrevianamide E synthase and converts brevianamide F to deoxybrevianamide E via reverse prenylation at C-2 of the indole ring leading to the bicyclo[2.2.2]diazaoctane core. Deoxybrevianamide E is further hydroxylated at C-6 of the indole ring, likely catalyzed by the cytochrome P450 monooxygenase notG', to yield 6-hydroxy-deoxybrevianamide E. 6-hydroxy-deoxybrevianamide E is a specific substrate of the prenyltransferase notC' for normal prenylation at C-7 to produce 6-hydroxy-7-prenyl-deoxybrevianamide, also called notoamide S. As the proposed pivotal branching point in notoamide biosynthesis, notoamide S can be diverted to notoamide E through an oxidative pyran ring closure putatively catalyzed by either notH' cytochrome P450 monooxygenase or the notD' FAD-linked oxidoreductase. This step would be followed by an indole 2,3-epoxidation-initiated pinacol-like rearrangement catalyzed by the notB' FAD-dependent monooxygenase leading to the formation of notoamide C and notoamide D. On the other hand notoamide S is converted to notoamide T by notH' (or notD'), a bifunctional oxidase that also functions as the intramolecular Diels-Alderase responsible for generation of (-)-notoamide T. To generate antipodal (+)-notoaminide T, notH (or notD) in Aspergillus strain MF297-2 is expected to catalyze a Diels-Alder reaction leading to the opposite stereochemistry. The remaining oxidoreductase notD' (or notH') likely catalyzes the oxidative pyran ring formation to yield (-)-stephacidin A. The FAD-dependent monooxygenase notI' is highly similar to notB' and is predicted to catalyze a similar conversion from (-)-stephacidin A to (+)-notoamide B via the 2,3-epoxidation of (-)-stephacidin A followed by a pinacol-type rearrangement. Finally, it remains unclear which enzyme could be responsible for the final hydroxylation steps leading to notoamide A and sclerotiamide. This is FAD-dependent monooxygenase notI' from Aspergillus versicolor.